A 50-amino-acid polypeptide reads, in one-letter code: Disintegrin pyramidin-A (50 aa).

The Disintegrin domain occupies 1-47 (DCASGPCCRDCKFLKEGTICKRARGDNMDDYCNGKTCDCPRNPHKGE). 4 disulfide bridges follow: Cys-2–Cys-11, Cys-7–Cys-32, Cys-8–Cys-37, and Cys-20–Cys-39. The short motif at 24 to 26 (RGD) is the Cell attachment site element.

The protein belongs to the venom metalloproteinase (M12B) family. P-II subfamily. P-IIa sub-subfamily. Monomer (disintegrin). As to expression, expressed by the venom gland.

The protein resides in the secreted. Inhibits ADP-induced human platelet aggregation. This chain is Disintegrin pyramidin-A, found in Echis pyramidum leakeyi (Leakey's carpet viper).